Consider the following 288-residue polypeptide: ATP synthase gamma chain (288 aa).

Belongs to the ATPase gamma chain family. As to quaternary structure, F-type ATPases have 2 components, CF(1) - the catalytic core - and CF(0) - the membrane proton channel. CF(1) has five subunits: alpha(3), beta(3), gamma(1), delta(1), epsilon(1). CF(0) has three main subunits: a, b and c.

It is found in the cell inner membrane. Functionally, produces ATP from ADP in the presence of a proton gradient across the membrane. The gamma chain is believed to be important in regulating ATPase activity and the flow of protons through the CF(0) complex. This chain is ATP synthase gamma chain, found in Vibrio parahaemolyticus serotype O3:K6 (strain RIMD 2210633).